We begin with the raw amino-acid sequence, 397 residues long: Elongation factor Tu (397 aa).

The tr-type G domain occupies 10-207; it reads KPHVNIGTIG…ACDSYIPEPE (198 aa). Residues 19–26 are G1; that stretch reads GHIDHGKT. Residue 19–26 participates in GTP binding; it reads GHIDHGKT. Position 26 (T26) interacts with Mg(2+). The interval 60–64 is G2; the sequence is GITIA. The G3 stretch occupies residues 81–84; that stretch reads DCPG. GTP-binding positions include 81–85 and 136–139; these read DCPGH and NKCD. Positions 136 to 139 are G4; the sequence is NKCD. The tract at residues 174 to 176 is G5; that stretch reads SAL.

The protein belongs to the TRAFAC class translation factor GTPase superfamily. Classic translation factor GTPase family. EF-Tu/EF-1A subfamily. As to quaternary structure, monomer.

The protein resides in the cytoplasm. The catalysed reaction is GTP + H2O = GDP + phosphate + H(+). In terms of biological role, GTP hydrolase that promotes the GTP-dependent binding of aminoacyl-tRNA to the A-site of ribosomes during protein biosynthesis. The protein is Elongation factor Tu of Oleidesulfovibrio alaskensis (strain ATCC BAA-1058 / DSM 17464 / G20) (Desulfovibrio alaskensis).